Consider the following 359-residue polypeptide: MSDYYEILGVPKDADSDEIKKAFRKLALKYHPDRNAGDKEAEEKFKEINEAYQVLGNDERRQTYDRYGKEGLNGAFGNDFGGFDFGDIFDTFFGGGGFNKSRSQRYDDAYDLDSEILVSISFKDAFFGVSKDIKYKIKKPCKTCDGTGSKDKKLNTCPYCGGSGKIVKRSGFLSFAQTCPFCKGSGQIVKEKCHDCAGKGFIEEQVNVKFDIPKGVNTGIRIRIAKKGNISKSGEIGDLYVAVQVKDDKFFVRSADDIYIEVPVFFTQAILGKTIKVPTMHGEKELQLKVGSKDKDQFVIEKEGFENIRTKIAGNLIVQINVQTPKKLTDEQIELLEKLHESFDKTADGIFDKIKNWFK.

Positions 3-68 (DYYEILGVPK…ERRQTYDRYG (66 aa)) constitute a J domain. The segment at 128–205 (GVSKDIKYKI…CAGKGFIEEQ (78 aa)) adopts a CR-type zinc-finger fold. Positions 141, 144, 157, 160, 179, 182, 193, and 196 each coordinate Zn(2+). CXXCXGXG motif repeat units follow at residues 141 to 148 (CKTCDGTG), 157 to 164 (CPYCGGSG), 179 to 186 (CPFCKGSG), and 193 to 200 (CHDCAGKG).

Belongs to the DnaJ family. Homodimer. Requires Zn(2+) as cofactor.

It localises to the cytoplasm. Its function is as follows. Participates actively in the response to hyperosmotic and heat shock by preventing the aggregation of stress-denatured proteins and by disaggregating proteins, also in an autonomous, DnaK-independent fashion. Unfolded proteins bind initially to DnaJ; upon interaction with the DnaJ-bound protein, DnaK hydrolyzes its bound ATP, resulting in the formation of a stable complex. GrpE releases ADP from DnaK; ATP binding to DnaK triggers the release of the substrate protein, thus completing the reaction cycle. Several rounds of ATP-dependent interactions between DnaJ, DnaK and GrpE are required for fully efficient folding. Also involved, together with DnaK and GrpE, in the DNA replication of plasmids through activation of initiation proteins. The polypeptide is Chaperone protein DnaJ (Campylobacter hominis (strain ATCC BAA-381 / DSM 21671 / CCUG 45161 / LMG 19568 / NCTC 13146 / CH001A)).